We begin with the raw amino-acid sequence, 172 residues long: Myosin regulatory light chain (172 aa).

A Phosphothreonine modification is found at T17. S18 carries the post-translational modification Phosphoserine. EF-hand domains are found at residues 27 to 62, 98 to 133, and 134 to 168; these read AQIQ…LGKE, DPEE…MGER, and YSEE…GTKD. Positions 40, 42, 44, and 51 each coordinate Ca(2+).

In terms of assembly, myosin is a hexamer of 2 heavy chains and 4 light chains (two regulatory light chains and two essential light chains). Post-translationally, may be phosphorylated by let-502 or/and pak-1 and dephosphorylated by mel-11 to regulate its activation and myosin II-mediated contraction. Expressed in the spermathecal and uterine walls. Weak expression in gonadal sheath and intestinal muscle. Not detected in vulval, pharyngeal or body wall muscles.

The protein localises to the cytoplasm. The protein resides in the cytoskeleton. Functionally, regulates myosin II activity and organization during embryo elongation. May be involved in the organization of mlc-5 into bundles. Required maternally for cytokinesis during meiosis and mitosis in the early embryo and for the establishment of embryonic anterior-posterior polarity. The chain is Myosin regulatory light chain from Caenorhabditis elegans.